The sequence spans 183 residues: Large ribosomal subunit protein bL25 (183 aa).

This sequence belongs to the bacterial ribosomal protein bL25 family. CTC subfamily. In terms of assembly, part of the 50S ribosomal subunit; part of the 5S rRNA/L5/L18/L25 subcomplex. Contacts the 5S rRNA. Binds to the 5S rRNA independently of L5 and L18.

This is one of the proteins that binds to the 5S RNA in the ribosome where it forms part of the central protuberance. The protein is Large ribosomal subunit protein bL25 of Desulfotalea psychrophila (strain LSv54 / DSM 12343).